The sequence spans 241 residues: tRNA (guanine-N(7)-)-methyltransferase (241 aa).

The S-adenosyl-L-methionine site is built by Glu76, Glu101, Asp128, and Asp150. Asp150 is a catalytic residue. Residues Lys154, Asp186, and 219–222 (TRYE) contribute to the substrate site.

It belongs to the class I-like SAM-binding methyltransferase superfamily. TrmB family.

The catalysed reaction is guanosine(46) in tRNA + S-adenosyl-L-methionine = N(7)-methylguanosine(46) in tRNA + S-adenosyl-L-homocysteine. Its pathway is tRNA modification; N(7)-methylguanine-tRNA biosynthesis. In terms of biological role, catalyzes the formation of N(7)-methylguanine at position 46 (m7G46) in tRNA. This chain is tRNA (guanine-N(7)-)-methyltransferase, found in Cereibacter sphaeroides (strain ATCC 17023 / DSM 158 / JCM 6121 / CCUG 31486 / LMG 2827 / NBRC 12203 / NCIMB 8253 / ATH 2.4.1.) (Rhodobacter sphaeroides).